The sequence spans 206 residues: Two-component response regulator ARR7 (206 aa).

The 128-residue stretch at 25 to 152 folds into the Response regulatory domain; sequence HVLAVDDSIV…DVKRIKQLIM (128 aa). At D85 the chain carries 4-aspartylphosphate. A disordered region spans residues 165 to 206; that stretch reads SNKRKLQEDSDTSSSSHDDTSIKDSSCSKRMKSESENLFSLL.

Belongs to the ARR family. Type-A subfamily. Two-component system major event consists of a His-to-Asp phosphorelay between a sensor histidine kinase (HK) and a response regulator (RR). In plants, the His-to-Asp phosphorelay involves an additional intermediate named Histidine-containing phosphotransfer protein (HPt). This multistep phosphorelay consists of a His-Asp-His-Asp sequential transfer of a phosphate group between first a His and an Asp of the HK protein, followed by the transfer to a conserved His of the HPt protein and finally the transfer to an Asp in the receiver domain of the RR protein. Predominantly expressed in roots and young flowers.

It is found in the nucleus. Functions as a response regulator involved in His-to-Asp phosphorelay signal transduction system. Phosphorylation of the Asp residue in the receiver domain activates the ability of the protein to promote the transcription of target genes. Type-A response regulators seem to act as negative regulators of the cytokinin signaling. In Arabidopsis thaliana (Mouse-ear cress), this protein is Two-component response regulator ARR7 (ARR7).